The following is a 103-amino-acid chain: Small ribosomal subunit protein uS10 (103 aa).

The protein belongs to the universal ribosomal protein uS10 family. In terms of assembly, part of the 30S ribosomal subunit.

Its function is as follows. Involved in the binding of tRNA to the ribosomes. The protein is Small ribosomal subunit protein uS10 of Marinomonas sp. (strain MWYL1).